Reading from the N-terminus, the 311-residue chain is Vomeronasal type-1 receptor 3 (311 aa).

The Extracellular portion of the chain corresponds to 1-5 (MASKD). A helical transmembrane segment spans residues 6–26 (FAIGMILLSQIMVGFLGNFFL). Topologically, residues 27–51 (LYHYSFLCFTRGMLQSTDLILKHLT) are cytoplasmic. The helical transmembrane segment at 52–72 (IANSLVILSKGIPQTMAAFGL) threads the bilayer. The Extracellular segment spans residues 73–92 (KDSLSDIGCKFVFYVHRVGR). The helical transmembrane segment at 93–113 (AVCVGNACLLSVFQVITISPS) threads the bilayer. The Cytoplasmic portion of the chain corresponds to 114-130 (EFRWAELKLHAHKYIRS). The helical transmembrane segment at 131-151 (FILVLCWILNTLVNITVLLHV) threads the bilayer. Residues 152–187 (TGKWNSINSTKTNDYGYCSGGSRSRIPHSLHIVLLS) lie on the Extracellular side of the membrane. An N-linked (GlcNAc...) asparagine glycan is attached at Asn-159. The helical transmembrane segment at 188–208 (SLDVLCLGLMTLASGSMVFIL) threads the bilayer. The Cytoplasmic segment spans residues 209 to 232 (HRHKQQVQHIHGTNLSARSSPESR). Residues 233 to 249 (VTQSILVLVSTLCYFTR) traverse the membrane as a helical segment. At 250–264 (SPPSLHMSLFPNPSW) the chain is on the extracellular side. A helical membrane pass occupies residues 265 to 285 (WLLNTSALITACFPMVSPFVL). At 286–311 (MSRHPRIPRLGSACCGRNPQFPKLVR) the chain is on the cytoplasmic side.

The protein belongs to the G-protein coupled receptor 1 family.

It is found in the cell membrane. In terms of biological role, putative pheromone receptor. The polypeptide is Vomeronasal type-1 receptor 3 (VN1R3) (Homo sapiens (Human)).